The following is a 66-amino-acid chain: Potassium channel toxin alpha-KTx (66 aa).

The first 21 residues, 1–21 (MNTKVVLIMLMITSVILVVEA), serve as a signal peptide directing secretion. Disulfide bonds link C29-C49, C35-C59, C39-C61, and C44-C64.

The protein belongs to the short scorpion toxin superfamily. Potassium channel inhibitor family. In terms of tissue distribution, expressed by the venom gland.

It is found in the secreted. Blocks voltage-gated potassium channels. The polypeptide is Potassium channel toxin alpha-KTx (Hoffmannihadrurus gertschi (Scorpion)).